A 2278-amino-acid polypeptide reads, in one-letter code: Protein Ycf2 (2278 aa).

This sequence belongs to the Ycf2 family.

The protein resides in the plastid. It localises to the chloroplast stroma. It is found in the chromoplast stroma. Its function is as follows. Probable ATPase of unknown function. Its presence in a non-photosynthetic plant (Epifagus virginiana) and experiments in tobacco indicate that it has an essential function which is probably not related to photosynthesis. The sequence is that of Protein Ycf2 (ycf2-A) from Solanum lycopersicum (Tomato).